The following is a 408-amino-acid chain: NADH-quinone oxidoreductase subunit D (408 aa).

It belongs to the complex I 49 kDa subunit family. As to quaternary structure, NDH-1 is composed of 14 different subunits. Subunits NuoB, C, D, E, F, and G constitute the peripheral sector of the complex.

Its subcellular location is the cell inner membrane. It catalyses the reaction a quinone + NADH + 5 H(+)(in) = a quinol + NAD(+) + 4 H(+)(out). Functionally, NDH-1 shuttles electrons from NADH, via FMN and iron-sulfur (Fe-S) centers, to quinones in the respiratory chain. The immediate electron acceptor for the enzyme in this species is believed to be ubiquinone. Couples the redox reaction to proton translocation (for every two electrons transferred, four hydrogen ions are translocated across the cytoplasmic membrane), and thus conserves the redox energy in a proton gradient. This chain is NADH-quinone oxidoreductase subunit D, found in Campylobacter jejuni subsp. jejuni serotype O:6 (strain 81116 / NCTC 11828).